Here is a 486-residue protein sequence, read N- to C-terminus: NADH-quinone oxidoreductase subunit N (486 aa).

Transmembrane regions (helical) follow at residues Ile5 to Leu25, Leu41 to Phe61, Gly77 to Met97, Ser118 to Leu138, Tyr165 to Gly185, Phe209 to Phe229, Thr245 to Ala265, Leu275 to Ile295, Ile304 to Val324, Val335 to Met355, Ala380 to Phe400, Gly413 to Leu433, and Val458 to Phe478.

It belongs to the complex I subunit 2 family. As to quaternary structure, NDH-1 is composed of 14 different subunits. Subunits NuoA, H, J, K, L, M, N constitute the membrane sector of the complex.

The protein resides in the cell inner membrane. It carries out the reaction a quinone + NADH + 5 H(+)(in) = a quinol + NAD(+) + 4 H(+)(out). In terms of biological role, NDH-1 shuttles electrons from NADH, via FMN and iron-sulfur (Fe-S) centers, to quinones in the respiratory chain. The immediate electron acceptor for the enzyme in this species is believed to be ubiquinone. Couples the redox reaction to proton translocation (for every two electrons transferred, four hydrogen ions are translocated across the cytoplasmic membrane), and thus conserves the redox energy in a proton gradient. The polypeptide is NADH-quinone oxidoreductase subunit N (Bdellovibrio bacteriovorus (strain ATCC 15356 / DSM 50701 / NCIMB 9529 / HD100)).